Here is a 165-residue protein sequence, read N- to C-terminus: Pyruvoyl-dependent arginine decarboxylase (165 aa).

Serine 53 is modified (pyruvic acid (Ser)).

It belongs to the PdaD family. In terms of assembly, trimer of an alpha-beta dimer. The cofactor is pyruvate.

It carries out the reaction L-arginine + H(+) = agmatine + CO2. The sequence is that of Pyruvoyl-dependent arginine decarboxylase (pdaD) from Methanocaldococcus jannaschii (strain ATCC 43067 / DSM 2661 / JAL-1 / JCM 10045 / NBRC 100440) (Methanococcus jannaschii).